Reading from the N-terminus, the 685-residue chain is E3 ubiquitin-protein ligase RNF103 (685 aa).

Transmembrane regions (helical) follow at residues 6-26 (FFLL…EAIV), 326-346 (LFVL…FITQ), 366-386 (LLII…LDSF), and 411-431 (MFYS…GLLI). The span at 526 to 543 (EEMSEGSQDTENDSESEN) shows a compositional bias: acidic residues. The tract at residues 526–550 (EEMSEGSQDTENDSESENTDTLSSE) is disordered. Residues 621–663 (CVVCLENFENGCLLMGLPCGHVFHQNCIVMWLAGGRHCCPVCR) form an RING-type zinc finger.

As to quaternary structure, interacts with DERL1 and VCP. Highly expressed in the normal cerebellum but not in the cerebral cortex.

The protein localises to the endoplasmic reticulum membrane. The enzyme catalyses S-ubiquitinyl-[E2 ubiquitin-conjugating enzyme]-L-cysteine + [acceptor protein]-L-lysine = [E2 ubiquitin-conjugating enzyme]-L-cysteine + N(6)-ubiquitinyl-[acceptor protein]-L-lysine.. Its pathway is protein modification; protein ubiquitination. Its function is as follows. Acts as an E2-dependent E3 ubiquitin-protein ligase, probably involved in the ER-associated protein degradation pathway. The chain is E3 ubiquitin-protein ligase RNF103 (RNF103) from Homo sapiens (Human).